A 250-amino-acid chain; its full sequence is Cobalt transport protein CbiM (250 aa).

Positions 1-24 (MKYWGTALLGAFCVFFFTPNTAYA) are cleaved as a signal peptide. 6 helical membrane passes run 32 to 52 (LPAGWCLFWLALSVPFVFWGI), 67 to 87 (MLLGLAGAFVFVLSALKIPSV), 99 to 119 (LGAILFGPAVMSVLGCIVLLF), 122 to 142 (LLLAHGGITTLGANVFSMGVM), 161 to 181 (VAVFLAASLGNMTTYMVTSLQ), and 203 to 223 (IFAITQIPLAITEGLLTVFVF).

The protein belongs to the CbiM family. Forms an energy-coupling factor (ECF) transporter complex composed of an ATP-binding protein (A component, CbiO), a transmembrane protein (T component, CbiQ) and 2 possible substrate-capture proteins (S components, CbiM and CbiN) of unknown stoichimetry.

It localises to the cell membrane. Its pathway is cofactor biosynthesis; adenosylcobalamin biosynthesis. In terms of biological role, part of the energy-coupling factor (ECF) transporter complex CbiMNOQ involved in cobalt import. This chain is Cobalt transport protein CbiM, found in Desulforamulus reducens (strain ATCC BAA-1160 / DSM 100696 / MI-1) (Desulfotomaculum reducens).